Reading from the N-terminus, the 444-residue chain is MTDSTHRTTAIILAAGLGTRMKSRLPKALHRLGNQPMINHLITTARQVFDDVVVVTGPDMPELEKAVRPFKTVTQVERLGTAHAANTARDLFGTGDVAILYADNPLITAETMRRLLAARREGASLALLGMRPAEPGRYGRIVEDHGRVVKIVEFKDATEDERRITLCNAGVMCAGVDDFRTWLANVGNDNAQGEYYLTDVVEMAAKAGPVVCVEAPEAELAGVNSRSELARAEATLQTRLRNAAMDAGVTLVAPETVFFSTDTVIEADVTIEPNVFFGPGVKVRSGALIRAFSHLEGCEVGENAMIGPYARLRPGTLCAAQTHVGNFVELKNVELGEGAKANHLTYLGDASIGSGTNVGAGTITCNYDGVFKHRTTIGERVFVGSDSILVAPVTVGDDALIAAGSVITSDVPPGDLALGRARQTLKSGQGLQIKQSLKARKEQG.

The segment at 1 to 226 (MTDSTHRTTA…EAELAGVNSR (226 aa)) is pyrophosphorylase. UDP-N-acetyl-alpha-D-glucosamine contacts are provided by residues 13–16 (LAAG), lysine 27, glutamine 75, and 80–81 (GT). Aspartate 103 lines the Mg(2+) pocket. Positions 139, 153, 168, and 224 each coordinate UDP-N-acetyl-alpha-D-glucosamine. Asparagine 224 lines the Mg(2+) pocket. Residues 227-247 (SELARAEATLQTRLRNAAMDA) are linker. The segment at 248–444 (GVTLVAPETV…QSLKARKEQG (197 aa)) is N-acetyltransferase. UDP-N-acetyl-alpha-D-glucosamine-binding residues include arginine 313 and lysine 331. The Proton acceptor role is filled by histidine 343. UDP-N-acetyl-alpha-D-glucosamine contacts are provided by tyrosine 346 and asparagine 357. Acetyl-CoA-binding positions include alanine 360, 366–367 (NY), serine 385, alanine 403, and arginine 420.

This sequence in the N-terminal section; belongs to the N-acetylglucosamine-1-phosphate uridyltransferase family. It in the C-terminal section; belongs to the transferase hexapeptide repeat family. Homotrimer. The cofactor is Mg(2+).

It is found in the cytoplasm. The enzyme catalyses alpha-D-glucosamine 1-phosphate + acetyl-CoA = N-acetyl-alpha-D-glucosamine 1-phosphate + CoA + H(+). It carries out the reaction N-acetyl-alpha-D-glucosamine 1-phosphate + UTP + H(+) = UDP-N-acetyl-alpha-D-glucosamine + diphosphate. It functions in the pathway nucleotide-sugar biosynthesis; UDP-N-acetyl-alpha-D-glucosamine biosynthesis; N-acetyl-alpha-D-glucosamine 1-phosphate from alpha-D-glucosamine 6-phosphate (route II): step 2/2. The protein operates within nucleotide-sugar biosynthesis; UDP-N-acetyl-alpha-D-glucosamine biosynthesis; UDP-N-acetyl-alpha-D-glucosamine from N-acetyl-alpha-D-glucosamine 1-phosphate: step 1/1. Its pathway is bacterial outer membrane biogenesis; LPS lipid A biosynthesis. Functionally, catalyzes the last two sequential reactions in the de novo biosynthetic pathway for UDP-N-acetylglucosamine (UDP-GlcNAc). The C-terminal domain catalyzes the transfer of acetyl group from acetyl coenzyme A to glucosamine-1-phosphate (GlcN-1-P) to produce N-acetylglucosamine-1-phosphate (GlcNAc-1-P), which is converted into UDP-GlcNAc by the transfer of uridine 5-monophosphate (from uridine 5-triphosphate), a reaction catalyzed by the N-terminal domain. The sequence is that of Bifunctional protein GlmU from Gluconobacter oxydans (strain 621H) (Gluconobacter suboxydans).